The primary structure comprises 233 residues: 7-cyano-7-deazaguanine synthase (233 aa).

Residue 7-17 (CSGGLDSVSLA) participates in ATP binding. Residues cysteine 185, cysteine 193, cysteine 196, and cysteine 199 each coordinate Zn(2+).

Belongs to the QueC family. Zn(2+) is required as a cofactor.

The catalysed reaction is 7-carboxy-7-deazaguanine + NH4(+) + ATP = 7-cyano-7-deazaguanine + ADP + phosphate + H2O + H(+). It functions in the pathway purine metabolism; 7-cyano-7-deazaguanine biosynthesis. Its function is as follows. Catalyzes the ATP-dependent conversion of 7-carboxy-7-deazaguanine (CDG) to 7-cyano-7-deazaguanine (preQ(0)). This Paracoccus denitrificans (strain Pd 1222) protein is 7-cyano-7-deazaguanine synthase.